The sequence spans 190 residues: Potassium-transporting ATPase KdpC subunit (190 aa).

Residues 10–30 traverse the membrane as a helical segment; that stretch reads TFLFLLLITGGVYPLLTTALG.

The protein belongs to the KdpC family. As to quaternary structure, the system is composed of three essential subunits: KdpA, KdpB and KdpC.

It is found in the cell inner membrane. Its function is as follows. Part of the high-affinity ATP-driven potassium transport (or Kdp) system, which catalyzes the hydrolysis of ATP coupled with the electrogenic transport of potassium into the cytoplasm. This subunit acts as a catalytic chaperone that increases the ATP-binding affinity of the ATP-hydrolyzing subunit KdpB by the formation of a transient KdpB/KdpC/ATP ternary complex. This Escherichia coli O127:H6 (strain E2348/69 / EPEC) protein is Potassium-transporting ATPase KdpC subunit.